The following is a 195-amino-acid chain: Coagulogen (195 aa).

A signal peptide spans 1-20; it reads MEKKLLGIAILFVTVVSVLA. Disulfide bonds link C28/C188, C30/C115, C80/C182, C85/C141, C95/C189, C108/C161, C147/C191, and C155/C193.

The protein belongs to the coagulin family. In terms of assembly, coagulogen is cleaved after Arg-38 and Arg-66 by a clotting enzyme contained in the hemocyte and activated by a bacterial endotoxin (lipopolysaccharide). This cleavage releases the peptide C and leaves 2 chains of coagulin, A and B, linked by two disulfide bonds. Coagulin molecules interlink to form a gel. Hemolymph.

The protein resides in the secreted. Functionally, coagulogen is a gel-forming protein of hemolymph; it hinders the spread of invaders by immobilizing them. The chain is Coagulogen from Limulus polyphemus (Atlantic horseshoe crab).